The sequence spans 233 residues: 3-dehydroquinate dehydratase (233 aa).

3-dehydroquinate is bound by residues 34–36 (ELR) and R64. Residue H118 is the Proton donor/acceptor of the active site. Catalysis depends on K145, which acts as the Schiff-base intermediate with substrate. R185, S205, and Q209 together coordinate 3-dehydroquinate.

It belongs to the type-I 3-dehydroquinase family. In terms of assembly, homodimer.

The catalysed reaction is 3-dehydroquinate = 3-dehydroshikimate + H2O. Its pathway is metabolic intermediate biosynthesis; chorismate biosynthesis; chorismate from D-erythrose 4-phosphate and phosphoenolpyruvate: step 3/7. Functionally, involved in the third step of the chorismate pathway, which leads to the biosynthesis of aromatic amino acids. Catalyzes the cis-dehydration of 3-dehydroquinate (DHQ) and introduces the first double bond of the aromatic ring to yield 3-dehydroshikimate. This chain is 3-dehydroquinate dehydratase, found in Coxiella burnetii (strain CbuK_Q154) (Coxiella burnetii (strain Q154)).